The sequence spans 272 residues: NH(3)-dependent NAD(+) synthetase (272 aa).

Position 45–52 (Gly45–Ser52) interacts with ATP. Asp51 serves as a coordination point for Mg(2+). Position 138 (Arg138) interacts with deamido-NAD(+). ATP is bound at residue Thr158. Residue Glu163 participates in Mg(2+) binding. 2 residues coordinate deamido-NAD(+): Lys171 and Asp178. Positions 187 and 209 each coordinate ATP. His258 to Lys259 is a binding site for deamido-NAD(+).

It belongs to the NAD synthetase family. Homodimer.

It carries out the reaction deamido-NAD(+) + NH4(+) + ATP = AMP + diphosphate + NAD(+) + H(+). The protein operates within cofactor biosynthesis; NAD(+) biosynthesis; NAD(+) from deamido-NAD(+) (ammonia route): step 1/1. In terms of biological role, catalyzes the ATP-dependent amidation of deamido-NAD to form NAD. Uses ammonia as a nitrogen source. This chain is NH(3)-dependent NAD(+) synthetase, found in Bacillus cereus (strain 03BB102).